We begin with the raw amino-acid sequence, 83 residues long: U5-theraphotoxin-Hs1a 1 (83 aa).

The signal sequence occupies residues 1–21 (MKTSMFLTLTGLGLLFVVCYA). Positions 22-49 (SESEEKEFPKELLSSIFAADSDFKVEER) are excised as a propeptide. 3 disulfides stabilise this stretch: Cys51/Cys63, Cys56/Cys68, and Cys62/Cys75.

It belongs to the neurotoxin 10 (Hwtx-1) family. 51 (Hntx-8) subfamily. Hntx-8 sub-subfamily. As to expression, expressed by the venom gland.

The protein localises to the secreted. In terms of biological role, agglutinates human and mice erythrocytes. This activity can be specifically inhibited by mannosamine. This lectin shows very low toxicity in both mammals and insects. This Cyriopagopus schmidti (Chinese bird spider) protein is U5-theraphotoxin-Hs1a 1.